A 341-amino-acid chain; its full sequence is Dihydroorotate dehydrogenase (quinone) (341 aa).

FMN is bound by residues 62-66 (AGMDK) and Thr86. Lys66 is a binding site for substrate. 111 to 115 (NRMGF) is a binding site for substrate. 2 residues coordinate FMN: Asn139 and Asn172. Residue Asn172 participates in substrate binding. Ser175 serves as the catalytic Nucleophile. Asn177 serves as a coordination point for substrate. FMN-binding residues include Lys217 and Thr245. 246 to 247 (NT) lines the substrate pocket. Residues Gly268, Gly297, and 318-319 (YS) contribute to the FMN site.

Belongs to the dihydroorotate dehydrogenase family. Type 2 subfamily. Monomer. Requires FMN as cofactor.

It is found in the cell membrane. It catalyses the reaction (S)-dihydroorotate + a quinone = orotate + a quinol. It functions in the pathway pyrimidine metabolism; UMP biosynthesis via de novo pathway; orotate from (S)-dihydroorotate (quinone route): step 1/1. Its function is as follows. Catalyzes the conversion of dihydroorotate to orotate with quinone as electron acceptor. The polypeptide is Dihydroorotate dehydrogenase (quinone) (Shewanella loihica (strain ATCC BAA-1088 / PV-4)).